A 498-amino-acid polypeptide reads, in one-letter code: MTSSANLRPDIVLIGAGIMGATFGTLLKELNPSYSMMMFERLSDCGQESSQSWNNAGTGHAANCELNYTPQRPDGTVEITQALRVNTEFDLSRQLWSYLVTKGAIPDPQSFIHPCPHMSMVWGAENVAFLKARFQAMSAHHCYHGMEYTEDGAQIEKWAPLTMEGRDPAEPVAATRIITGTDVDYGSLTHLLVAHLKAQPDFDLHYNTEVEGLDREPDGRWRVTFKDVNSGERHSVSAGFVFIGAGGASIDLLQKSNIPEGKGYGGFPVSGIWLRCDVDAVTQRHHAKVYGKASSGSPPMSVPHLDTRVIDGKTSLLFGPYAGFSTKFLKHGSLTDLFGSITLHNIGPLLDVGRHNIELTEYLIAQVLQTHHHQFEMLKAFFPNAKRADWKEAVAGQRVQVIKPYPDGGGFLEFGTEIVPAADHSLVALLGASPGASTAAAIALEVLEACFADRLTDDAWLPALKRIIPTYGIDLREDAEACRASRAATASVLNIDNI.

It belongs to the MQO family. FAD is required as a cofactor.

The catalysed reaction is (S)-malate + a quinone = a quinol + oxaloacetate. Its pathway is carbohydrate metabolism; tricarboxylic acid cycle; oxaloacetate from (S)-malate (quinone route): step 1/1. The sequence is that of Probable malate:quinone oxidoreductase from Granulibacter bethesdensis (strain ATCC BAA-1260 / CGDNIH1).